A 211-amino-acid chain; its full sequence is RING finger protein 222 (211 aa).

The RING-type zinc-finger motif lies at 14–65; that stretch reads CPVCYEKFRDLDGASRTLSCGHVFCHDCLVKYLLSTRVDGQVQRTIVCPICR. The chain crosses the membrane as a helical span at residues 187–207; that stretch reads LITLIAVVAVVAAILPWVLLV.

The protein resides in the membrane. This chain is RING finger protein 222 (Rnf222), found in Mus musculus (Mouse).